The sequence spans 1242 residues: MDFLPTQVFYGRRWRPRMPPRPWRPRMPTMQRPDQQARQMQQLIAAVSTLALRQNAAAPQRGKKKQPRRKKPKPQPEKPKKQEQKPKQKKAPKRKPGRRERMCMKIEHDCIFEVKHEGKVTGYACLVGDKVMKPAHVPGVIDNADLARLSYKKSSKYDLECAQIPVAMKSDASKYTHEKPEGHYNWHYGAVQYTGGRFTVPTGVGKPGDSGRPIFDNKGPVVAIVLGGANEGTRTALSVVTWNKDMVTKITPEGTVEWAASTVTAMCLLTNISFPCFQPSCAPCCYEKGPEPTLRMLEENVNSEGYYDLLHAAVYCRNSSRSKRSTANHFNAYKLTRPYVAYCADCGMGHSCHSPAMIENIQADATDGTLKIQFASQIGLTKTDTHDHTKIRYAEGHDIAEAARSTLKVHSSSECTVTGTMGHFILAKCPPGERISVSFVDSKNEHRTCRIAYHHEQRLIGRERFTVRPHHGIELPCTTYQLTTAETSEEIDMHMPPDIPDRTILSQQSGNVKITVNGRTVRYSSSCGSQAVGTTTTDKTINSCTVDKCQAYVTSHTKWQFNSPFVPRRMQAERKGKVHIPFPLINTTCRVPLAPEALVRSGKREATLSLHPIHPTLLSYRTFGAERVFDEQWITAQTEVTIPVPVEGVEYQWGNHKPQRFVVALTTEGKAHGWPHEIIEYYYGLHPTTTIVVVIRVSVVVLLSFAASVYMCVVARTKCLTPYALTPGAVVPVTIGVLCCAPKAHAASFAEGMAYLWDNNQSMFWMELTGPLALLILATCCARSLLSCCKGSFLVAMSIGSAVASAYEHTAIIPNQVGFPYKAHVAREGYSPLTLQMQVIETSLEPTLNLEYITCDYKTKVPSPYVKCCGTAECRTQDKPEYKCAVFTGVYPFMWGGAYCFCDSENTQMSEAYVERADVCKHDHAAAYRAHTASLRAKIKVTYGTVNQTVEAYVNGDHAVTIAGTKFIFGPVSTPWTPFDTKILVYKGELYNQDFPRYGAGQPGRFGDIQSRTLDSRDLYANTGLKLARPAAGNIHVPYTQTPSGFKTWQKDRDSPLNAKAPFGCIIQTNPVRAMNCAVGNIPVSMDIADSAFTRLTDAPVISELTCTVSTCTHSSDFGGIAVLSYKVEKSGRCDIHSHSNVAVLQEVSIETEGRSVIHFSTASASPSFVVSVCSSRATCTAKCEPPKDHVVTYPANHNGVTLPDLSSTAMTWAQHLAGGVGLLIALAVLILVIVTCVTLRR.

The interval 14–101 (WRPRMPPRPW…PKRKPGRRER (88 aa)) is disordered. Positions 26–42 (RMPTMQRPDQQARQMQQ) are enriched in low complexity. The tract at residues 35 to 66 (QQARQMQQLIAAVSTLALRQNAAAPQRGKKKQ) is host transcription inhibition. The short motif at 59–96 (PQRGKKKQPRRKKPKPQPEKPKKQEQKPKQKKAPKRKP) is the Nuclear localization signal element. A compositionally biased stretch (basic residues) spans 61 to 73 (RGKKKQPRRKKPK). A compositionally biased stretch (basic and acidic residues) spans 74–86 (PQPEKPKKQEQKP). Positions 82 to 111 (QEQKPKQKKAPKRKPGRRERMCMKIEHDCI) are binding to the viral RNA. Residues 87-98 (KQKKAPKRKPGR) are compositionally biased toward basic residues. A ribosome-binding region spans residues 96-110 (PGRRERMCMKIEHDC). Cysteines 110 and 125 form a disulfide. In terms of domain architecture, Peptidase S3 spans 110-258 (CIFEVKHEGK…KITPEGTVEW (149 aa)). Histidine 136 acts as the Charge relay system in catalysis. The Nuclear export signal motif lies at 141–151 (IDNADLARLSY). Residues 152–157 (KKSSKY) are interaction with spike glycoprotein E2. Catalysis depends on aspartate 158, which acts as the Charge relay system. Residues 180-190 (PEGHYNWHYGA) form a dimerization of the capsid protein region. Serine 210 acts as the Charge relay system in catalysis. The tract at residues 216-220 (DNKGP) is dimerization of the capsid protein. The tract at residues 259–272 (AASTVTAMCLLTNI) is functions as an uncleaved signal peptide for the precursor of protein E3/E2. 8 disulfides stabilise this stretch: cysteine 267-cysteine 276, cysteine 281-cysteine 285, cysteine 284-cysteine 316, cysteine 343-cysteine 449, cysteine 346-cysteine 352, cysteine 415-cysteine 429, cysteine 477-cysteine 589, and cysteine 527-cysteine 544. Asparagine 271 carries N-linked (GlcNAc...) asparagine; by host glycosylation. At 325–690 (STANHFNAYK…YYYGLHPTTT (366 aa)) the chain is on the extracellular side. Interaction with host Mxra8 receptor regions lie at residues 350 to 353 (HSCH) and 386 to 388 (HDH). Interaction with host Mxra8 receptor regions lie at residues 508 to 511 (QSGN) and 540 to 546 (TINSCTV). N-linked (GlcNAc...) asparagine; by host glycosylation occurs at asparagine 586. Residues 691 to 711 (IVVVIRVSVVVLLSFAASVYM) traverse the membrane as a helical segment. Residues 712 to 746 (CVVARTKCLTPYALTPGAVVPVTIGVLCCAPKAHA) are Cytoplasmic-facing. Positions 714-718 (VARTK) are interaction with the capsid protein. Residues cysteine 719, cysteine 739, and cysteine 740 are each lipidated (S-palmitoyl cysteine; by host). The segment at 719 to 739 (CLTPYALTPGAVVPVTIGVLC) is transient transmembrane before p62-6K protein processing. Cysteine 719 and cysteine 740 are disulfide-bonded. Residues 747–761 (ASFAEGMAYLWDNNQ) are Extracellular-facing. N-linked (GlcNAc...) asparagine; by host glycosylation occurs at asparagine 760. Residues 762–782 (SMFWMELTGPLALLILATCCA) traverse the membrane as a helical segment. At 783-785 (RSL) the chain is on the cytoplasmic side. A helical transmembrane segment spans residues 786–806 (LSCCKGSFLVAMSIGSAVASA). The Extracellular segment spans residues 807–1217 (YEHTAIIPNQ…STAMTWAQHL (411 aa)). Intrachain disulfides connect cysteine 855–cysteine 920, cysteine 868–cysteine 900, cysteine 869–cysteine 902, and cysteine 874–cysteine 884. The interval 890 to 907 (VYPFMWGGAYCFCDSENT) is E1 fusion peptide loop. 2 N-linked (GlcNAc...) asparagine; by host glycosylation sites follow: asparagine 947 and asparagine 1076. Cystine bridges form between cysteine 1065–cysteine 1077, cysteine 1107–cysteine 1180, cysteine 1112–cysteine 1184, and cysteine 1134–cysteine 1174. A helical membrane pass occupies residues 1218–1238 (AGGVGLLIALAVLILVIVTCV). A lipid anchor (S-palmitoyl cysteine; by host) is attached at cysteine 1237. The Cytoplasmic segment spans residues 1239–1242 (TLRR).

In terms of assembly, homodimer. Homomultimer. Interacts with host karyopherin KPNA4; this interaction allows the nuclear import of the viral capsid protein. Interacts with spike glycoprotein E2. Interacts with host IRAK1; the interaction leads to inhibition of IRAK1-dependent signaling. As to quaternary structure, the precursor of protein E3/E2 and E1 form a heterodimer shortly after synthesis. The precursor of protein E3/E2 and E1 form a heterodimer shortly after synthesis. Processing of the precursor of protein E3/E2 into E2 and E3 results in a heterodimer of the spike glycoproteins E2 and E1. Spike at virion surface are constituted of a trimer of E2-E1 heterodimers. After target cell attachment and endocytosis, E1 change conformation to form homotrimers. Interacts with 6K protein. In terms of assembly, interacts with spike glycoprotein E1. Processing of the precursor of protein E3/E2 into E2 and E3 results in a heterodimer of the spike glycoproteins E2 and E1. Spike at virion surface are constituted of a trimer of E2-E1 heterodimers. Interacts with 6K protein. Interacts with host MXRA8; this interaction mediates virus entry. As to quaternary structure, oligomer. Interacts with spike glycoprotein E1. Interacts with spike glycoprotein E2. Post-translationally, structural polyprotein: Specific enzymatic cleavages in vivo yield mature proteins. Capsid protein is auto-cleaved during polyprotein translation, unmasking a signal peptide at the N-terminus of the precursor of E3/E2. The remaining polyprotein is then targeted to the host endoplasmic reticulum, where host signal peptidase cleaves it into pE2, 6K and E1 proteins. pE2 is further processed to mature E3 and E2 by host furin in trans-Golgi vesicle. Palmitoylated via thioester bonds. These palmitoylations may induce disruption of the C-terminus transmembrane. This would result in the reorientation of E2 C-terminus from lumenal to cytoplasmic side. In terms of processing, N-glycosylated. Post-translationally, palmitoylated via thioester bonds.

The protein resides in the virion. It is found in the host cytoplasm. Its subcellular location is the host cell membrane. The protein localises to the host nucleus. It localises to the virion membrane. The protein resides in the host Golgi apparatus. It is found in the host trans-Golgi network. Its subcellular location is the host endoplasmic reticulum. The catalysed reaction is Autocatalytic release of the core protein from the N-terminus of the togavirus structural polyprotein by hydrolysis of a -Trp-|-Ser- bond.. In terms of biological role, forms an icosahedral capsid with a T=4 symmetry composed of 240 copies of the capsid protein surrounded by a lipid membrane through which penetrate 80 spikes composed of trimers of E1-E2 heterodimers. The capsid protein binds to the viral RNA genome at a site adjacent to a ribosome binding site for viral genome translation following genome release. Possesses a protease activity that results in its autocatalytic cleavage from the nascent structural protein. Following its self-cleavage, the capsid protein transiently associates with ribosomes, and within several minutes the protein binds to viral RNA and rapidly assembles into icosahedric core particles. The resulting nucleocapsid eventually associates with the cytoplasmic domain of the spike glycoprotein E2 at the cell membrane, leading to budding and formation of mature virions. In case of infection, new virions attach to target cells and after clathrin-mediated endocytosis their membrane fuses with the host endosomal membrane. This leads to the release of the nucleocapsid into the cytoplasm, followed by an uncoating event necessary for the genomic RNA to become accessible. The uncoating might be triggered by the interaction of capsid proteins with ribosomes. Binding of ribosomes would release the genomic RNA since the same region is genomic RNA-binding and ribosome-binding. Specifically inhibits interleukin-1 receptor-associated kinase 1/IRAK1-dependent signaling during viral entry, representing a means by which the alphaviruses may evade innate immune detection and activation prior to viral gene expression. Functionally, provides the signal sequence for the translocation of the precursor of protein E3/E2 to the host endoplasmic reticulum. Furin-cleaved E3 remains associated with spike glycoprotein E1 and mediates pH protection of the latter during the transport via the secretory pathway. After virion release from the host cell, the assembly protein E3 is gradually released in the extracellular space. Plays a role in viral attachment to target host cell, by binding to the cell receptor MXRA8. Synthesized as a p62 precursor which is processed by furin at the cell membrane just before virion budding, giving rise to E2-E1 heterodimer. The p62-E1 heterodimer is stable, whereas E2-E1 is unstable and dissociate at low pH. p62 is processed at the last step, presumably to avoid E1 fusion activation before its final export to cell surface. E2 C-terminus contains a transitory transmembrane that would be disrupted by palmitoylation, resulting in reorientation of the C-terminal tail from lumenal to cytoplasmic side. This step is critical since E2 C-terminus is involved in budding by interacting with capsid proteins. This release of E2 C-terminus in cytoplasm occurs lately in protein export, and precludes premature assembly of particles at the endoplasmic reticulum membrane. Its function is as follows. Acts as a viroporin that participates in virus glycoprotein processing and transport to the plasma membrane, cell permeabilization and budding of viral particles. Disrupts the calcium homeostasis of the cell, probably at the endoplasmic reticulum level. This leads to cytoplasmic calcium elevation. Because of its lipophilic properties, the 6K protein is postulated to influence the selection of lipids that interact with the transmembrane domains of the glycoproteins, which, in turn, affects the deformability of the bilayer required for the extreme curvature that occurs as budding proceeds. Present in low amount in virions, about 3% compared to viral glycoproteins. In terms of biological role, class II viral fusion protein. Fusion activity is inactive as long as E1 is bound to E2 in mature virion. After virus attachment to target cell via host MXRA8 and endocytosis, acidification of the endosome induce dissociation of E1/E2 heterodimer and concomitant trimerization of the E1 subunits. This E1 trimer is fusion active, and promotes release of viral nucleocapsid in cytoplasm after endosome and viral membrane fusion. Efficient fusion requires the presence of cholesterol and sphingolipid in the target membrane. In Mayaro virus (strain Brazil) (MAYV), this protein is Structural polyprotein.